Reading from the N-terminus, the 111-residue chain is DNA-binding protein AF_2068 (111 aa).

Belongs to the PDCD5 family.

The protein is DNA-binding protein AF_2068 of Archaeoglobus fulgidus (strain ATCC 49558 / DSM 4304 / JCM 9628 / NBRC 100126 / VC-16).